The chain runs to 641 residues: 1-deoxy-D-xylulose-5-phosphate synthase (641 aa).

Thiamine diphosphate-binding positions include His79 and 120-122; that span reads AHS. Asp151 serves as a coordination point for Mg(2+). Thiamine diphosphate-binding positions include 152–153, Asn180, Tyr290, and Glu372; that span reads GA. Asn180 provides a ligand contact to Mg(2+).

It belongs to the transketolase family. DXPS subfamily. In terms of assembly, homodimer. It depends on Mg(2+) as a cofactor. Thiamine diphosphate serves as cofactor.

The catalysed reaction is D-glyceraldehyde 3-phosphate + pyruvate + H(+) = 1-deoxy-D-xylulose 5-phosphate + CO2. Its pathway is metabolic intermediate biosynthesis; 1-deoxy-D-xylulose 5-phosphate biosynthesis; 1-deoxy-D-xylulose 5-phosphate from D-glyceraldehyde 3-phosphate and pyruvate: step 1/1. In terms of biological role, catalyzes the acyloin condensation reaction between C atoms 2 and 3 of pyruvate and glyceraldehyde 3-phosphate to yield 1-deoxy-D-xylulose-5-phosphate (DXP). This chain is 1-deoxy-D-xylulose-5-phosphate synthase, found in Bradyrhizobium sp. (strain ORS 278).